The chain runs to 574 residues: Laccase-12 (574 aa).

The N-terminal stretch at 1-27 (MAAASSVLRCCLLVAALMTLSAMGAEA) is a signal peptide. Plastocyanin-like domains lie at 35–151 (DVQT…PPAG) and 161–314 (EEVP…YDDP). N81 carries an N-linked (GlcNAc...) asparagine glycan. Cu cation-binding residues include H85, H87, H130, and H132. 13 N-linked (GlcNAc...) asparagine glycosylation sites follow: N173, N190, N206, N242, N302, N335, N342, N381, N388, N398, N434, N441, and N447. In terms of domain architecture, Plastocyanin-like 3 spans 424–558 (NFPYYPLNPF…KMAWLVLDGS (135 aa)). 7 residues coordinate Cu cation: H475, H478, H480, H537, C538, H539, and H543.

This sequence belongs to the multicopper oxidase family. Requires Cu cation as cofactor.

The protein localises to the secreted. Its subcellular location is the extracellular space. It localises to the apoplast. It catalyses the reaction 4 hydroquinone + O2 = 4 benzosemiquinone + 2 H2O. Lignin degradation and detoxification of lignin-derived products. The protein is Laccase-12 (LAC12) of Oryza sativa subsp. japonica (Rice).